A 425-amino-acid chain; its full sequence is Synaptotagmin-4 (425 aa).

At methionine 1–threonine 16 the chain is on the vesicular side. A helical transmembrane segment spans residues valine 17 to cysteine 37. Over cysteine 38–glycine 425 the chain is Cytoplasmic. Disordered stretches follow at residues asparagine 102–valine 121 and phenylalanine 126–serine 147. A compositionally biased stretch (polar residues) spans phenylalanine 105–glutamate 119. Serine 135 is modified (phosphoserine; by MAPK8). Residues glutamate 137–threonine 146 show a composition bias toward low complexity. C2 domains follow at residues lysine 153–threonine 274 and glycine 287–histidine 420. Ca(2+) contacts are provided by aspartate 246, serine 249, and aspartate 252.

It belongs to the synaptotagmin family. As to quaternary structure, interacts with KIF1A; the interaction increases in presence of calcium and decreases when SYT4 is phosphorylated at Ser-135. Requires Ca(2+) as cofactor. In terms of processing, phosphorylation at Ser-135 by MAPK8/JNK1 reduces interaction with KIF1A and neuronal dense core vesicles mobility. Widely expressed. Expressed in the brain. Expressed in pituitary gland, cerebellum, cortex, hypothalamus and hippocampus.

Its subcellular location is the cytoplasmic vesicle. It is found in the secretory vesicle. The protein resides in the neuronal dense core vesicle membrane. Its function is as follows. Synaptotagmin family member which does not bind Ca(2+). Involved in neuronal dense core vesicles (DCVs) mobility through its interaction with KIF1A. Upon increased neuronal activity, phosphorylation by MAPK8/JNK1 destabilizes the interaction with KIF1A and captures DCVs to synapses. Plays a role in dendrite formation by melanocytes. The chain is Synaptotagmin-4 (Syt4) from Rattus norvegicus (Rat).